The sequence spans 940 residues: Isoleucine--tRNA ligase (940 aa).

Residues 58 to 68 carry the 'HIGH' region motif; the sequence is PYANGNIHIGH. Residue glutamate 563 coordinates L-isoleucyl-5'-AMP. The 'KMSKS' region motif lies at 604 to 608; the sequence is KMSKS. Lysine 607 lines the ATP pocket. Zn(2+)-binding residues include cysteine 903, cysteine 906, cysteine 923, and cysteine 926.

Belongs to the class-I aminoacyl-tRNA synthetase family. IleS type 1 subfamily. In terms of assembly, monomer. Requires Zn(2+) as cofactor.

The protein localises to the cytoplasm. It carries out the reaction tRNA(Ile) + L-isoleucine + ATP = L-isoleucyl-tRNA(Ile) + AMP + diphosphate. In terms of biological role, catalyzes the attachment of isoleucine to tRNA(Ile). As IleRS can inadvertently accommodate and process structurally similar amino acids such as valine, to avoid such errors it has two additional distinct tRNA(Ile)-dependent editing activities. One activity is designated as 'pretransfer' editing and involves the hydrolysis of activated Val-AMP. The other activity is designated 'posttransfer' editing and involves deacylation of mischarged Val-tRNA(Ile). The chain is Isoleucine--tRNA ligase from Buchnera aphidicola subsp. Acyrthosiphon pisum (strain APS) (Acyrthosiphon pisum symbiotic bacterium).